The primary structure comprises 135 residues: ATP synthase epsilon chain (135 aa).

Belongs to the ATPase epsilon chain family. As to quaternary structure, F-type ATPases have 2 components, CF(1) - the catalytic core - and CF(0) - the membrane proton channel. CF(1) has five subunits: alpha(3), beta(3), gamma(1), delta(1), epsilon(1). CF(0) has three main subunits: a, b and c.

The protein localises to the cell inner membrane. Its function is as follows. Produces ATP from ADP in the presence of a proton gradient across the membrane. This chain is ATP synthase epsilon chain, found in Rhodopseudomonas palustris (strain BisB5).